A 489-amino-acid polypeptide reads, in one-letter code: Probable transporter MCH1 (489 aa).

The next 3 membrane-spanning stretches (helical) occupy residues 30–50 (IAYIFALFAAITSGFVSLISL), 68–88 (MIVTVINMGMYLTPPILGIIA), and 92–112 (GPITLSLSSVLGFIPSYAYLA). N123 carries an N-linked (GlcNAc...) asparagine glycan. Transmembrane regions (helical) follow at residues 132–152 (TLVCFFIIGVATSGLYFSALI), 163–183 (LLSISIPTTCYGLSSLIGSQF), 202–222 (VFKAFAWIYTVIGVMIWIATS), 279–299 (VLYIFGATIFCALGPLEMFIA), 307–327 (VLAGGHEPAMSSALLSIYALT), 351–371 (WILLLFLVVGLVTQGKIYMLS), 388–408 (FYIGIMQGIAYGGLFTIYPTI), and 421–441 (AYGTLMIAPALGSALSCLIYA). N-linked (GlcNAc...) asparagine glycosylation occurs at N450. Residues 462 to 482 (ETTALEFCAAILLTVVVTVLW) traverse the membrane as a helical segment.

This sequence belongs to the major facilitator superfamily.

The protein resides in the vacuole membrane. In terms of biological role, probable transporter. The protein is Probable transporter MCH1 (MCH1) of Candida glabrata (strain ATCC 2001 / BCRC 20586 / JCM 3761 / NBRC 0622 / NRRL Y-65 / CBS 138) (Yeast).